A 131-amino-acid chain; its full sequence is Small ribosomal subunit protein uS9 (131 aa).

The protein belongs to the universal ribosomal protein uS9 family.

The polypeptide is Small ribosomal subunit protein uS9 (Actinobacillus succinogenes (strain ATCC 55618 / DSM 22257 / CCUG 43843 / 130Z)).